Reading from the N-terminus, the 1076-residue chain is Guanylyl cyclase C (1076 aa).

The first 23 residues, 1 to 23 (MKSPLLGLVVWSLLLQLLQPGLA), serve as a signal peptide directing secretion. At 24–433 (FWNSQISQNC…PHDIPGLGPH (410 aa)) the chain is on the extracellular side. 9 N-linked (GlcNAc...) asparagine glycosylation sites follow: N35, N82, N191, N198, N287, N306, N310, N348, and N405. Residues 434–457 (ILLIAVCTLAGVVVLILLIALLVL) traverse the membrane as a helical segment. The Cytoplasmic segment spans residues 458 to 1076 (RKYKKDNELR…NTTDQDSTYF (619 aa)). The 261-residue stretch at 492–752 (LKIDDDKKRD…KIENTLAKIF (261 aa)) folds into the Protein kinase domain. Residues 827–957 (TVYFSDIVGF…DTVNTASRME (131 aa)) enclose the Guanylate cyclase domain.

This sequence belongs to the adenylyl cyclase class-4/guanylyl cyclase family. As to quaternary structure, homotrimer. Interacts via its C-terminal region with NHERF4. Interacts with the lectin chaperone VIP36. Glycosylation at Asn-62 is required for interaction with VIP36 while glycosylation at Asn-348 and Asn-405 modulates ligand-mediated GC-C activation.

It is found in the cell membrane. The protein resides in the endoplasmic reticulum membrane. It catalyses the reaction GTP = 3',5'-cyclic GMP + diphosphate. In terms of biological role, guanylyl cyclase that catalyzes synthesis of cyclic GMP (cGMP) from GTP. This Cavia porcellus (Guinea pig) protein is Guanylyl cyclase C (GUCY2C).